Reading from the N-terminus, the 767-residue chain is Photosystem I P700 chlorophyll a apoprotein A1 (767 aa).

Residues 1-22 (MTISPPESGEKNKKVLEDPVKA) are disordered. A compositionally biased stretch (basic and acidic residues) spans 8 to 22 (SGEKNKKVLEDPVKA). The next 8 helical transmembrane spans lie at 76–99 (IFSA…FHGA), 162–185 (LMAL…FHYH), 201–225 (LNHH…HIGA), 309–327 (VSHH…GHMY), 368–391 (RHAQ…HHMY), 407–433 (LGLF…IAMV), 455–477 (ALIS…LYIH), and 558–576 (LMIH…LILL). 2 residues coordinate [4Fe-4S] cluster: C600 and C609. 2 consecutive transmembrane segments (helical) span residues 616 to 637 (HVFL…HFSW) and 681 to 703 (ISMY…MFLF). H692 contributes to the divinylchlorophyll a' binding site. Divinyl chlorophyll a is bound by residues M700 and Y708. W709 serves as a coordination point for phylloquinone. A helical transmembrane segment spans residues 741 to 761 (AVGVTHFLVGGIATTWAFFHA).

This sequence belongs to the PsaA/PsaB family. As to quaternary structure, the PsaA/B heterodimer binds the P700 divinyl chlorophyll special pair and subsequent electron acceptors. PSI consists of a core antenna complex that captures photons, and an electron transfer chain that converts photonic excitation into a charge separation. The cyanobacterial PSI reaction center is composed of one copy each of PsaA,B,C,D,E,F,I,J,K,L,M and X, and forms trimeric complexes. PSI electron transfer chain: 5 divinyl chlorophyll a, 1 divinyl chlorophyll a', 2 phylloquinones and 3 4Fe-4S clusters. PSI core antenna: 90 divinyl chlorophyll a, 22 carotenoids, 3 phospholipids and 1 galactolipid. P700 is a divinyl chlorophyll a/divinyl chlorophyll a' dimer, A0 is one or more divinyl chlorophyll a, A1 is one or both phylloquinones and FX is a shared 4Fe-4S iron-sulfur center. is required as a cofactor.

It is found in the cellular thylakoid membrane. It catalyses the reaction reduced [plastocyanin] + hnu + oxidized [2Fe-2S]-[ferredoxin] = oxidized [plastocyanin] + reduced [2Fe-2S]-[ferredoxin]. In terms of biological role, psaA and PsaB bind P700, the primary electron donor of photosystem I (PSI), as well as the electron acceptors A0, A1 and FX. PSI is a plastocyanin/cytochrome c6-ferredoxin oxidoreductase, converting photonic excitation into a charge separation, which transfers an electron from the donor P700 chlorophyll pair to the spectroscopically characterized acceptors A0, A1, FX, FA and FB in turn. Oxidized P700 is reduced on the lumenal side of the thylakoid membrane by plastocyanin or cytochrome c6. The polypeptide is Photosystem I P700 chlorophyll a apoprotein A1 (Prochlorococcus marinus (strain AS9601)).